The following is a 205-amino-acid chain: Glycerol-3-phosphate acyltransferase (205 aa).

6 consecutive transmembrane segments (helical) span residues 7-27 (MTALVLAGYLSGSLLGAVWVC), 54-74 (VVPAALTLGVDAAKAMPVLWV), 80-100 (LPIWAQGAVGLSVLVGHSYPL), 116-136 (VLLMIATPVAWVCALCWALLA), 141-161 (TAAVASLAAALLAPLASYWLA), and 163-183 (EATLVVSVFSALVLVRHAWNI).

The protein belongs to the PlsY family. In terms of assembly, probably interacts with PlsX.

Its subcellular location is the cell inner membrane. The catalysed reaction is an acyl phosphate + sn-glycerol 3-phosphate = a 1-acyl-sn-glycero-3-phosphate + phosphate. The protein operates within lipid metabolism; phospholipid metabolism. Catalyzes the transfer of an acyl group from acyl-phosphate (acyl-PO(4)) to glycerol-3-phosphate (G3P) to form lysophosphatidic acid (LPA). This enzyme utilizes acyl-phosphate as fatty acyl donor, but not acyl-CoA or acyl-ACP. The chain is Glycerol-3-phosphate acyltransferase from Chromohalobacter salexigens (strain ATCC BAA-138 / DSM 3043 / CIP 106854 / NCIMB 13768 / 1H11).